A 989-amino-acid polypeptide reads, in one-letter code: Presequence protease, mitochondrial (989 aa).

The N-terminal 16 residues, 1 to 16 (MLRFQRFASSYAQAQA), are a transit peptide targeting the mitochondrion. His-84 lines the Zn(2+) pocket. Glu-87 functions as the Proton acceptor in the catalytic mechanism. His-88 contributes to the Zn(2+) binding site. The active site involves Glu-160. A Zn(2+)-binding site is contributed by Glu-185. Ser-920 carries the phosphoserine modification. An ATP-binding site is contributed by 972–979 (GPGIEGKT).

It belongs to the peptidase M16 family. PreP subfamily. In terms of assembly, monomer and homodimer; homodimerization is induced by binding of the substrate. Requires Zn(2+) as cofactor.

Its subcellular location is the mitochondrion intermembrane space. The protein resides in the mitochondrion matrix. Activated by nucleotides, including ATP, GTP, CTP, UTP, and ADP. Activated by copper, manganese, calcium and magnesium ions; copper and manganese restore activity following inactivation by EDTA (ethylenediaminetetraacetic acid). Inhibited by metal chelators including EDTA, EGTA (ethylene glycol bis(2-aminoethyl)tetraacetic acid), and 1,10-phenanthroline. Inhibited by copper, zinc, and iron ions. Also inhibited by dithiothreitol p-mercuribenzenesulfonic acid, N-ethylmaleimide, protoporphyrin, hemin, protamine and triarginine. Degrades mitochondrial transit peptides after their cleavage in the intermembrane space or in the matrix, and presequence peptides; clearance of these peptides is required to keep the presequence processing machinery running. Preferentially cleaves the N-terminal side of paired basic amino acid residues. Also degrades other unstructured peptides. May function as an ATP-dependent peptidase as opposed to a metalloendopeptidase. The protein is Presequence protease, mitochondrial of Saccharomyces cerevisiae (strain ATCC 204508 / S288c) (Baker's yeast).